The chain runs to 514 residues: CENP-B homolog protein 1 (514 aa).

The region spanning 69–144 is the HTH CENPB-type domain; it reads DIKKIRAPKF…RRRHYIQQSA (76 aa).

The protein resides in the nucleus. The protein localises to the chromosome. Its subcellular location is the centromere. Its function is as follows. Binds to centromeric K-type repeat DNA and ARS3002 DNA. The CBH-binding consensus sequence is Py-Pu-A-T-A-T-Py-Pu-T-A. The polypeptide is CENP-B homolog protein 1 (cbh1) (Schizosaccharomyces pombe (strain 972 / ATCC 24843) (Fission yeast)).